Consider the following 252-residue polypeptide: Triosephosphate isomerase (252 aa).

10–12 is a binding site for substrate; it reads NWK. His-96 (electrophile) is an active-site residue. Glu-168 functions as the Proton acceptor in the catalytic mechanism. Residues Gly-174, Ser-214, and 235–236 each bind substrate; that span reads GG.

Belongs to the triosephosphate isomerase family. Homodimer.

It is found in the cytoplasm. The enzyme catalyses D-glyceraldehyde 3-phosphate = dihydroxyacetone phosphate. The protein operates within carbohydrate biosynthesis; gluconeogenesis. It functions in the pathway carbohydrate degradation; glycolysis; D-glyceraldehyde 3-phosphate from glycerone phosphate: step 1/1. Its function is as follows. Involved in the gluconeogenesis. Catalyzes stereospecifically the conversion of dihydroxyacetone phosphate (DHAP) to D-glyceraldehyde-3-phosphate (G3P). This chain is Triosephosphate isomerase, found in Streptococcus pyogenes serotype M5 (strain Manfredo).